The following is an 87-amino-acid chain: UPF0729 protein C18orf32 homolog (87 aa).

It belongs to the UPF0729 family.

This chain is UPF0729 protein C18orf32 homolog, found in Esox lucius (Northern pike).